A 429-amino-acid chain; its full sequence is Phosphoribosylamine--glycine ligase (429 aa).

The region spanning lysine 109–alanine 316 is the ATP-grasp domain. Residue valine 135–serine 196 coordinates ATP. Glutamate 286 and asparagine 288 together coordinate Mg(2+).

It belongs to the GARS family. It depends on Mg(2+) as a cofactor. The cofactor is Mn(2+).

The enzyme catalyses 5-phospho-beta-D-ribosylamine + glycine + ATP = N(1)-(5-phospho-beta-D-ribosyl)glycinamide + ADP + phosphate + H(+). The protein operates within purine metabolism; IMP biosynthesis via de novo pathway; N(1)-(5-phospho-D-ribosyl)glycinamide from 5-phospho-alpha-D-ribose 1-diphosphate: step 2/2. The polypeptide is Phosphoribosylamine--glycine ligase (Vibrio cholerae serotype O1 (strain ATCC 39315 / El Tor Inaba N16961)).